A 2193-amino-acid polypeptide reads, in one-letter code: Non-reducing polyketide synthase esdpA (2193 aa).

The 163-residue stretch at 90-252 (NVLLAPLTVL…AKVQVNGRYH (163 aa)) folds into the Starter acyltransferase (SAT) domain. The region spanning 381-797 (DECVAIVGAA…GNNTVIIVCE (417 aa)) is the Ketosynthase family 3 (KS3) domain. Active-site for beta-ketoacyl synthase activity residues include Cys546, His682, and His720. In terms of domain architecture, Malonyl-CoA:ACP transacylase (MAT) spans 906 to 1158 (VFSGQSGMTV…YFVDAVRRIK (253 aa)). The active-site For acyl/malonyl transferase activity is Ser992. The interval 1265–1392 (PPMLSLENFS…GRVVLEDRRR (128 aa)) is N-terminal hotdog fold. The PKS/mFAS DH domain occupies 1265–1569 (PPMLSLENFS…FVKISSHILQ (305 aa)). The tract at residues 1419 to 1569 (VFSASGSIAY…FVKISSHILQ (151 aa)) is C-terminal hotdog fold. Asp1479 serves as the catalytic Proton donor; for dehydratase activity. The Carrier domain maps to 1723–1799 (RILSDSMIKL…ELHDLMQSHP (77 aa)). Ser1759 carries the post-translational modification O-(pantetheine 4'-phosphoryl)serine. Residues 1944 to 2177 (YHGSEHKLLR…GFTHVDWSND (234 aa)) are methyltransferase (CMeT) domain.

Pantetheine 4'-phosphate serves as cofactor.

The protein operates within secondary metabolite biosynthesis; terpenoid biosynthesis. Its function is as follows. Non-reducing polyketide synthase; part of the cluster that mediates the biosynthesis of shearones, diterpenoid pyrones (DPs) which are structurally diverse meroterpenoids consisting of a diterpene linked by a pyrone, and which may exhibit a range of bioactivities. Whitin the pathway, esdpA takes part to the biosynthesis of the molecular scaffold via the production of the alpha-pyrone from one molecule of acetyl-CoA, two molecules of malonyl-CoA and one molecule of S-adenosyl-L-methionine (SAM). The molecular scaffold is commonly biosynthesized by a series of enzymes including the non-reducing polyketide synthase (NR-PKS) esdpA that generates an alpha-pyrone; the prenyltransferase esdpC that attaches a geranylgeranyl pyrophosphate (GGPP) produced by the GGPP synthase (GGPPS) esdpD onto the pyrone unit; the FAD-dependent monooxygenase esdpE that converts an olefin on the diterpene unit into an epoxide; and the terpene cyclase esdpB that catalyzes the cyclization reactions to give the molecular backbone shearone A. In the modification steps, esdpF oxidizes the hydroxy group to a ketone at C-3 and esdpG then attaches hydroxy groups at both C-11 and C-12. After that, esdpI hydroxylates at C-20 and esdpH hydroxylates at C-6'. The ether bridge is generated by nucleophilic attack of the hydroxy group at C-20 to the carbonyl carbon at C-3. EsdpH can also functions prior to esdpI. The different combinations of these modification enzymes lead to the production of diverse shearone derivatives, shearone I being the end product of the pathway. The alpha-ketoglutarate-dependent dioxygenase esdpJ seems not to be involved in this pathway. The sequence is that of Non-reducing polyketide synthase esdpA from Penicillium shearii (Eupenicillium shearii).